The chain runs to 182 residues: Ribosome-recycling factor (182 aa).

Residues 136–160 (VKKSEKDGDLSEDQSRDEQETIQKE) form a disordered region.

This sequence belongs to the RRF family.

It is found in the cytoplasm. Responsible for the release of ribosomes from messenger RNA at the termination of protein biosynthesis. May increase the efficiency of translation by recycling ribosomes from one round of translation to another. The polypeptide is Ribosome-recycling factor (Prochlorococcus marinus (strain NATL2A)).